We begin with the raw amino-acid sequence, 399 residues long: Cell division protein FtsZ (399 aa).

GTP is bound by residues 18 to 22, 105 to 107, E136, R140, and D184; these read GGGVN and GTG. The disordered stretch occupies residues 311-399; it reads GFDGGQPPSK…EELDVPDFLK (89 aa). The segment covering 388–399 has biased composition (acidic residues); the sequence is AAEELDVPDFLK.

This sequence belongs to the FtsZ family. Homodimer. Polymerizes to form a dynamic ring structure in a strictly GTP-dependent manner. Interacts directly with several other division proteins.

Its subcellular location is the cytoplasm. Functionally, essential cell division protein that forms a contractile ring structure (Z ring) at the future cell division site. The regulation of the ring assembly controls the timing and the location of cell division. One of the functions of the FtsZ ring is to recruit other cell division proteins to the septum to produce a new cell wall between the dividing cells. Binds GTP and shows GTPase activity. This chain is Cell division protein FtsZ, found in Streptomyces coelicolor (strain ATCC BAA-471 / A3(2) / M145).